Here is a 694-residue protein sequence, read N- to C-terminus: Elongation factor G (694 aa).

The 276-residue stretch at 10–285 (EKTRNIGIMA…GVVDYLPSPL (276 aa)) folds into the tr-type G domain. GTP contacts are provided by residues 19–26 (AHIDAGKT), 83–87 (DTPGH), and 137–140 (NKMD).

Belongs to the TRAFAC class translation factor GTPase superfamily. Classic translation factor GTPase family. EF-G/EF-2 subfamily.

The protein resides in the cytoplasm. In terms of biological role, catalyzes the GTP-dependent ribosomal translocation step during translation elongation. During this step, the ribosome changes from the pre-translocational (PRE) to the post-translocational (POST) state as the newly formed A-site-bound peptidyl-tRNA and P-site-bound deacylated tRNA move to the P and E sites, respectively. Catalyzes the coordinated movement of the two tRNA molecules, the mRNA and conformational changes in the ribosome. The chain is Elongation factor G from Lactobacillus delbrueckii subsp. bulgaricus (strain ATCC BAA-365 / Lb-18).